The sequence spans 118 residues: MTKNIHDVAYELQKAIAENDDFKTLKESYAAVQADAASKNLFDEFRTMQLSLQQKMMQGQEITEEDNQQAQEVVVRIQQDAKITKLMETEQRLNVVIGDVNKIIMKPLEELYSAQQQA.

Belongs to the UPF0342 family.

This chain is UPF0342 protein BT9727_0768, found in Bacillus thuringiensis subsp. konkukian (strain 97-27).